The following is a 198-amino-acid chain: tRNA (pseudouridine(54)-N(1))-methyltransferase (198 aa).

Leu128 lines the S-adenosyl-L-methionine pocket.

The protein belongs to the methyltransferase superfamily. TrmY family. Homodimer.

Its subcellular location is the cytoplasm. The catalysed reaction is pseudouridine(54) in tRNA + S-adenosyl-L-methionine = N(1)-methylpseudouridine(54) in tRNA + S-adenosyl-L-homocysteine + H(+). In terms of biological role, specifically catalyzes the N1-methylation of pseudouridine at position 54 (Psi54) in tRNAs. The chain is tRNA (pseudouridine(54)-N(1))-methyltransferase from Haloferax volcanii (strain ATCC 29605 / DSM 3757 / JCM 8879 / NBRC 14742 / NCIMB 2012 / VKM B-1768 / DS2) (Halobacterium volcanii).